The following is a 376-amino-acid chain: DnaJ homolog subfamily B member 12 (376 aa).

M1 carries the post-translational modification N-acetylmethionine. The tract at residues 45–97 (ALIESLNQKPQSTGDHPQPTDTTHTTTKKAGGTETPSANGEAGGGESAKGYTS) is disordered. The span at 57–84 (TGDHPQPTDTTHTTTKKAGGTETPSANG) shows a compositional bias: low complexity. The 65-residue stretch at 111-175 (DYYEILGVSR…EKRKQYDQFG (65 aa)) folds into the J domain. At H186 the chain carries Pros-methylhistidine. The chain crosses the membrane as a helical span at residues 243-263 (GGLGVFVQLMPILILILVSAL).

It belongs to the DnaJ family. DNAJB12/DNAJB14 subfamily. In terms of assembly, homodimer and homotetramer. Interacts (via J domain) with HSPA8/Hsc70. Forms a multiprotein complex, at least composed of DNAJB12, DNAJB14, HSPA8/Hsc70 and SGTA; interaction with DNAJB14 and HSPA8/Hsc70 is direct. In terms of processing, methylated at His-186 by METTL9.

It is found in the endoplasmic reticulum membrane. Its subcellular location is the nucleus membrane. Acts as a co-chaperone with HSPA8/Hsc70; required to promote protein folding and trafficking, prevent aggregation of client proteins, and promote unfolded proteins to endoplasmic reticulum-associated degradation (ERAD) pathway. Acts by determining HSPA8/Hsc70's ATPase and polypeptide-binding activities. Can also act independently of HSPA8/Hsc70: together with DNAJB14, acts as a chaperone that promotes maturation of potassium channels KCND2 and KCNH2 by stabilizing nascent channel subunits and assembling them into tetramers. While stabilization of nascent channel proteins is dependent on HSPA8/Hsc70, the process of oligomerization of channel subunits is independent of HSPA8/Hsc70. When overexpressed, forms membranous structures together with DNAJB14 and HSPA8/Hsc70 within the nucleus; the role of these structures, named DJANGOs, is still unclear. The sequence is that of DnaJ homolog subfamily B member 12 from Mus musculus (Mouse).